Reading from the N-terminus, the 640-residue chain is MSLIKKLPDIVANKISAGEVVQRPASAVKELLENAIDAGADEITLAIKAAGKTLIQVIDNGCGLSEEDATLCFERFATSKISDVGDLENLHTLGFRGEALASIASVSQVELKTKRYDDRTGTLVKISGGRFEEVSRTETPNGTAFSIRNLFYNVPARRKFLKTNATEYKHIFETVQAQTLVYPDIKWRFYSDDEEIFSFLNNNLSERLDYFFGKDFSQNLIEFTEENDFMKLRGYLGKPAMMKRTKNQQFLFINNRVTQSKLLSSAIMTAYGELLGEREYPFFLIYMDIAPHYIDVNVHPTKMEVKFDDERNIYNMVHSVVKHRIKTLDFSPNVQVEEKPDSPRPTGESFNFPGVAKRLSYNDRDADMRSSNALFRDYKTYYKAQDERAEPGFFANPKREMDWRSSLPAHTEASLTPPKQAEPEGNPTFHDGSRQMEIFIQSRDDEPATAGQERFVWQLHNTYILTQIKSGLLIIDQHVAHERILYERAIAVMESNVPNSQQLLFPHSAKLSAWEFDVLKEIKTDLVQLGFSLRILDQRTVLVEGIPPDVMPGREERILHEMLEQYQDYQQNLKLEQRDNVAKSYACRSSIMAGQKLSRNEMTSLIDQLFATSMPYVCPHGRPIIIKLSIEELDKMFGRS.

2 disordered regions span residues 332-353 (PNVQ…FNFP) and 408-431 (PAHT…TFHD).

This sequence belongs to the DNA mismatch repair MutL/HexB family.

This protein is involved in the repair of mismatches in DNA. It is required for dam-dependent methyl-directed DNA mismatch repair. May act as a 'molecular matchmaker', a protein that promotes the formation of a stable complex between two or more DNA-binding proteins in an ATP-dependent manner without itself being part of a final effector complex. The polypeptide is DNA mismatch repair protein MutL (Chloroherpeton thalassium (strain ATCC 35110 / GB-78)).